We begin with the raw amino-acid sequence, 480 residues long: MKYNLNQLFKNHRIKGLSTNSKTVKEDEVFFAIKGQNVDGNDFINDALNNGAVLVITENKNNTAIDKVIYVEDVHKALYEAIEIFYPKKPKNLISVTGTNGKSSVVSYIAQAYSLLKKKAAFIGTIGLEIFGSNNIINDVPSLTTFDYLSFRKVAHNLAEDSIEYLAFEASSHGLEQGRLGKTKVNIVSFTSFSQDHLDYHHTKENYLLAKLKLFTDHLLPSGIAILNSDIEEIEFVKDYLHNNNVKFITVGKKGDLQITKITCSLTGQNIDFIFNNIIYNLHTLIIGSFQASNLLIAALTLYYTGFKFDEIIEALAKVKPIKGRMERIDGTNIFVDYSHTPDSLEKALIELKNIKLHGSKLSVIFGCGGDRDKTKRALMGQIAAKLADNVIITDDNPRFEDPKLIRAEIIRGIGTATYTEIASRAEAIKYGINNLKQDDILLIAGKGHETYQIIGDKKLPFDDSEVVRKYLFEISYTRN.

Ser21 lines the UDP-N-acetyl-alpha-D-muramoyl-L-alanyl-D-glutamate pocket. An ATP-binding site is contributed by 98-104 (GTNGKSS). UDP-N-acetyl-alpha-D-muramoyl-L-alanyl-D-glutamate contacts are provided by residues 144-145 (TT), Ser171, Gln177, and Arg179. The residue at position 211 (Lys211) is an N6-carboxylysine. Meso-2,6-diaminopimelate-binding positions include Arg372, 396 to 399 (DNPR), Gly446, and Glu450. The short motif at 396–399 (DNPR) is the Meso-diaminopimelate recognition motif element.

Belongs to the MurCDEF family. MurE subfamily. Mg(2+) serves as cofactor. In terms of processing, carboxylation is probably crucial for Mg(2+) binding and, consequently, for the gamma-phosphate positioning of ATP.

It localises to the cytoplasm. The enzyme catalyses UDP-N-acetyl-alpha-D-muramoyl-L-alanyl-D-glutamate + meso-2,6-diaminopimelate + ATP = UDP-N-acetyl-alpha-D-muramoyl-L-alanyl-gamma-D-glutamyl-meso-2,6-diaminopimelate + ADP + phosphate + H(+). The protein operates within cell wall biogenesis; peptidoglycan biosynthesis. In terms of biological role, catalyzes the addition of meso-diaminopimelic acid to the nucleotide precursor UDP-N-acetylmuramoyl-L-alanyl-D-glutamate (UMAG) in the biosynthesis of bacterial cell-wall peptidoglycan. The sequence is that of UDP-N-acetylmuramoyl-L-alanyl-D-glutamate--2,6-diaminopimelate ligase from Rickettsia prowazekii (strain Madrid E).